We begin with the raw amino-acid sequence, 574 residues long: Alpha-mannosidase I MNS5 (574 aa).

The Cytoplasmic segment spans residues 1–9 (MSCPIHPRR). A helical; Signal-anchor for type II membrane protein transmembrane segment spans residues 10–26 (LFLCLLISLTFFVVDPS). Topologically, residues 27-574 (SQHIEVKKKQ…VGYCGLWNPL (548 aa)) are lumenal. N-linked (GlcNAc...) asparagine glycosylation is found at Asn89, Asn107, and Asn121. Glu134 acts as the Proton donor in catalysis. Residue Asn201 is glycosylated (N-linked (GlcNAc...) asparagine). The active site involves Asp274. Asn349 carries an N-linked (GlcNAc...) asparagine glycan. Glu367 (proton donor) is an active-site residue. The active site involves Glu388. Residue Thr471 participates in Ca(2+) binding. The N-linked (GlcNAc...) asparagine glycan is linked to Asn494.

The protein belongs to the glycosyl hydrolase 47 family. Requires Ca(2+) as cofactor.

It localises to the endoplasmic reticulum membrane. The protein operates within protein modification; protein glycosylation. In terms of biological role, can convert Man(9)GlcNAc(2) and Man(8)GlcNAc(2) into N-glycans with a terminal alpha-1,6-linked Man residue in the C-branch. Functions in the formation of unique N-glycan structures that are specifically recognized by components of the endoplasmic reticulum-associated degradation (ERAD) machinery, which leads to the degradation of misfolded glycoproteins. Most likely generates N-glycan signal on misfolded glycoproteins that is subsequently recognized by OS9. Required for ERAD of the heavily glycosylated and misfolded BRI1 variants BRI1-5 and BRI1-9. Does not seem to play role in N-glycan processing of correctly folded proteins destined for secretion. This Arabidopsis thaliana (Mouse-ear cress) protein is Alpha-mannosidase I MNS5 (MNS5).